The chain runs to 115 residues: Probable non-functional T cell receptor beta variable 23-1 (115 aa).

The N-terminal stretch at 1 to 21 (MGTRLLGCAALCLLAADSFHA) is a signal peptide. Residues 22-115 (KVTQTPGHLV…TALYLCASSQ (94 aa)) enclose the Ig-like domain. The cysteines at positions 42 and 111 are disulfide-linked.

As to quaternary structure, alpha-beta TR is a heterodimer composed of an alpha and beta chain; disulfide-linked. The alpha-beta TR is associated with the transmembrane signaling CD3 coreceptor proteins to form the TR-CD3 (TcR or TCR). The assembly of alpha-beta TR heterodimers with CD3 occurs in the endoplasmic reticulum where a single alpha-beta TR heterodimer associates with one CD3D-CD3E heterodimer, one CD3G-CD3E heterodimer and one CD247 homodimer forming a stable octameric structure. CD3D-CD3E and CD3G-CD3E heterodimers preferentially associate with TR alpha and TR beta chains, respectively. The association of the CD247 homodimer is the last step of TcR assembly in the endoplasmic reticulum and is required for transport to the cell surface.

Its subcellular location is the cell membrane. Its function is as follows. Probable non-functional open reading frame (ORF) of V region of the variable domain of T cell receptor (TR) beta chain. Non-functional ORF generally cannot participate in the synthesis of a productive T cell receptor (TR) chain due to altered V-(D)-J or switch recombination and/or splicing site (at mRNA level) and/or conserved amino acid change (protein level). Alpha-beta T cell receptors are antigen specific receptors which are essential to the immune response and are present on the cell surface of T lymphocytes. Recognize peptide-major histocompatibility (MH) (pMH) complexes that are displayed by antigen presenting cells (APC), a prerequisite for efficient T cell adaptive immunity against pathogens. Binding of alpha-beta TR to pMH complex initiates TR-CD3 clustering on the cell surface and intracellular activation of LCK that phosphorylates the ITAM motifs of CD3G, CD3D, CD3E and CD247 enabling the recruitment of ZAP70. In turn ZAP70 phosphorylates LAT, which recruits numerous signaling molecules to form the LAT signalosome. The LAT signalosome propagates signal branching to three major signaling pathways, the calcium, the mitogen-activated protein kinase (MAPK) kinase and the nuclear factor NF-kappa-B (NF-kB) pathways, leading to the mobilization of transcription factors that are critical for gene expression and essential for T cell growth and differentiation. The T cell repertoire is generated in the thymus, by V-(D)-J rearrangement. This repertoire is then shaped by intrathymic selection events to generate a peripheral T cell pool of self-MH restricted, non-autoaggressive T cells. Post-thymic interaction of alpha-beta TR with the pMH complexes shapes TR structural and functional avidity. This chain is Probable non-functional T cell receptor beta variable 23-1, found in Homo sapiens (Human).